Consider the following 184-residue polypeptide: ADP-ribosylation factor-like protein 2 (184 aa).

Gly-2 is lipidated: N-myristoyl glycine. Position 23 to 30 (23 to 30 (GLDNAGKT)) interacts with GTP. Residue Ser-45 is modified to Phosphoserine. GTP-binding positions include 66-70 (DVGGQ) and Gly-68. Lys-71 is covalently cross-linked (Glycyl lysine isopeptide (Lys-Gly) (interchain with G-Cter in ubiquitin)). 125 to 128 (NKQD) contacts GTP.

It belongs to the small GTPase superfamily. Arf family. As to quaternary structure, found in a complex with ARL2, ARL2BP and SLC25A6. Found in a complex with at least ARL2, PPP2CB, PPP2R1A, PPP2R2A, PPP2R5E and TBCD. Found in a complex with ARL2, ARL2BP and SLC25A4. The GTP-bound form interacts with PDE6D. Interacts with ELMOD2. The GTP-bound form interacts with ARL2BP. Interacts, preferentially in its GDP-bound state, with TBCD. Interacts with UNC119. Not N-myristoylated.

It localises to the mitochondrion intermembrane space. The protein localises to the cytoplasm. It is found in the cytoskeleton. Its subcellular location is the microtubule organizing center. The protein resides in the centrosome. It localises to the nucleus. Small GTP-binding protein which cycles between an inactive GDP-bound and an active GTP-bound form, and the rate of cycling is regulated by guanine nucleotide exchange factors (GEF) and GTPase-activating proteins (GAP). GTP-binding protein that does not act as an allosteric activator of the cholera toxin catalytic subunit. Regulates formation of new microtubules and centrosome integrity. Prevents the TBCD-induced microtubule destruction. Participates in association with TBCD, in the disassembly of the apical junction complexes. Antagonizes the effect of TBCD on epithelial cell detachment and tight and adherens junctions disassembly. Together with ARL2, plays a role in the nuclear translocation, retention and transcriptional activity of STAT3. Component of a regulated secretory pathway involved in Ca(2+)-dependent release of acetylcholine. Required for normal progress through the cell cycle. Also regulates mitochondrial integrity and function. This is ADP-ribosylation factor-like protein 2 (ARL2) from Homo sapiens (Human).